The sequence spans 224 residues: Orotidine 5'-phosphate decarboxylase (224 aa).

Residues Asp-10, Lys-32, 59–68, Thr-115, Arg-175, Gln-184, Gly-204, and Arg-205 each bind substrate; that span reads DLKLHDIPNT. Lys-61 acts as the Proton donor in catalysis.

Belongs to the OMP decarboxylase family. Type 1 subfamily. As to quaternary structure, homodimer.

It carries out the reaction orotidine 5'-phosphate + H(+) = UMP + CO2. It participates in pyrimidine metabolism; UMP biosynthesis via de novo pathway; UMP from orotate: step 2/2. Functionally, catalyzes the decarboxylation of orotidine 5'-monophosphate (OMP) to uridine 5'-monophosphate (UMP). This chain is Orotidine 5'-phosphate decarboxylase, found in Sphingopyxis alaskensis (strain DSM 13593 / LMG 18877 / RB2256) (Sphingomonas alaskensis).